We begin with the raw amino-acid sequence, 373 residues long: Glutamine synthetase (373 aa).

Ala2 is modified (N-acetylalanine). The segment at 2 to 25 is required for glutamine-induced ubiquitination by CRL4(CRBN) and proteasomal degradation; sequence ATSASSHLNKGIKQVYMSLPQGEK. N6-acetyllysine occurs at positions 11 and 14. The region spanning 24–106 is the GS beta-grasp domain; it reads EKVQAMYIWI…VFCEVFKYNR (83 aa). Tyr104 carries the post-translational modification Phosphotyrosine. The 261-residue stretch at 113–373 folds into the GS catalytic domain; that stretch reads LRHTCKRIMD…TGDEPFQYKN (261 aa). Glu134 lines the ATP pocket. 4 residues coordinate Mn(2+): Glu134, Glu136, Glu196, and Glu203. An ATP-binding site is contributed by 203 to 208; the sequence is EFQIGP. An L-glutamate-binding site is contributed by 246–247; it reads NW. His253 contributes to the Mn(2+) binding site. ATP is bound by residues 255-257, Arg319, and Arg324; that span reads NFS. Arg319 serves as a coordination point for L-glutamate. ADP is bound at residue 336 to 338; sequence YFE. Glu338 serves as a coordination point for Mn(2+). Residue Arg340 participates in L-glutamate binding. Residue Ser343 is modified to Phosphoserine.

This sequence belongs to the glutamine synthetase family. In terms of assembly, decamer; composed of two pentamers. Interacts with PALMD. Interacts with RHOJ. Interacts with BEST2; this interaction tethers a fraction of GLUL to the membrane, causing a decrease of cytosolic glutamine synthase (GS) activity and inhibits the chloride channel activity of BEST2 by affecting the gating at the aperture in the absence of intracellular glutamate. Mg(2+) is required as a cofactor. It depends on Mn(2+) as a cofactor. In terms of processing, palmitoylated; undergoes autopalmitoylation. Acetylated by EP300/p300; acetylation is stimulated by increased glutamine levels and promotes ubiquitin-mediated proteasomal degradation. Post-translationally, ubiquitinated by ZNRF1. Ubiquitinated by the DCX (DDB1-CUL4-X-box) E3 ubiquitin-protein ligase complex called CRL4(CRBN), leading to proteasomal degradation.

It localises to the cytoplasm. Its subcellular location is the cytosol. The protein resides in the microsome. The protein localises to the mitochondrion. It is found in the cell membrane. The catalysed reaction is L-glutamate + NH4(+) + ATP = L-glutamine + ADP + phosphate + H(+). It carries out the reaction L-cysteinyl-[protein] + hexadecanoyl-CoA = S-hexadecanoyl-L-cysteinyl-[protein] + CoA. With respect to regulation, glutamine synthetase activity is inhibited by methionine sulfoximine (MSO). Functionally, glutamine synthetase that catalyzes the ATP-dependent conversion of glutamate and ammonia to glutamine. Its role depends on tissue localization: in the brain, it regulates the levels of toxic ammonia and converts neurotoxic glutamate to harmless glutamine, whereas in the liver, it is one of the enzymes responsible for the removal of ammonia. Plays a key role in ammonium detoxification during erythropoiesis: the glutamine synthetase activity is required to remove ammonium generated by porphobilinogen deaminase (HMBS) during heme biosynthesis to prevent ammonium accumulation and oxidative stress. Essential for proliferation of fetal skin fibroblasts. Independently of its glutamine synthetase activity, required for endothelial cell migration during vascular development. Involved in angiogenesis by regulating membrane localization and activation of the GTPase RHOJ, possibly by promoting RHOJ palmitoylation. May act as a palmitoyltransferase for RHOJ: able to autopalmitoylate and then transfer the palmitoyl group to RHOJ. Plays a role in ribosomal 40S subunit biogenesis. Through the interaction with BEST2, inhibits BEST2 channel activity by affecting the gating at the aperture in the absence of intracellular L-glutamate, but sensitizes BEST2 to intracellular L-glutamate, which promotes the opening of BEST2 and thus relieves its inhibitory effect on BEST2. The sequence is that of Glutamine synthetase from Sus scrofa (Pig).